The sequence spans 226 residues: PKHD-type hydroxylase BP3529 (226 aa).

Positions 78–178 constitute a Fe2OG dioxygenase domain; it reads KIFPPLFNRY…RISAFFWLQS (101 aa). The Fe cation site is built by His-96, Asp-98, and His-159. A 2-oxoglutarate-binding site is contributed by Arg-169.

The cofactor is Fe(2+). Requires L-ascorbate as cofactor.

In Bordetella pertussis (strain Tohama I / ATCC BAA-589 / NCTC 13251), this protein is PKHD-type hydroxylase BP3529.